The primary structure comprises 80 residues: Protein UL148B (80 aa).

Residues A10–F30 form a helical membrane-spanning segment.

It localises to the host membrane. This Homo sapiens (Human) protein is Protein UL148B (UL148B).